Reading from the N-terminus, the 510-residue chain is GMP synthase [glutamine-hydrolyzing] (510 aa).

A Glutamine amidotransferase type-1 domain is found at 5 to 195 (LVLVIDFGGQ…LFKICGLKED (191 aa)). The active-site Nucleophile is the Cys-82. Active-site residues include His-169 and Glu-171. Positions 196–385 (WSMSSFAKEK…LGIPHKLVWR (190 aa)) constitute a GMPS ATP-PPase domain. 223-229 (SGGVDSS) is an ATP binding site.

As to quaternary structure, homodimer.

The catalysed reaction is XMP + L-glutamine + ATP + H2O = GMP + L-glutamate + AMP + diphosphate + 2 H(+). Its pathway is purine metabolism; GMP biosynthesis; GMP from XMP (L-Gln route): step 1/1. Its function is as follows. Catalyzes the synthesis of GMP from XMP. The protein is GMP synthase [glutamine-hydrolyzing] of Clostridium acetobutylicum (strain ATCC 824 / DSM 792 / JCM 1419 / IAM 19013 / LMG 5710 / NBRC 13948 / NRRL B-527 / VKM B-1787 / 2291 / W).